A 321-amino-acid chain; its full sequence is MLNNEYKNSALKIFSLKGNEPLAQEVADHVGIELGKCSVKRFSDGEIQINIEESIRGCDVFIIQPTSNPVNLHLMELLIMIDACRRASAANINIVVPYYGYARQDRKARSREPITAKLVANLIETAGADRMIALDLHAPQIQGFFDMPIDHLMGVPILAQYFKNETDIDPEECVVVSPDHGGVTRARKLADILKTPIAIIDKRRPKPNVAEVMNIVGEIEGRTAIIIDDIIDTAGTITLAAQALKDKGAKDVYACCTHPVLSGPAKERIENSAIKELVVTNSIQLDEKRKPENTKELSVAGLLAQAIIRVYERESVSVLFD.

Residues 44 to 46 (DGE) and 103 to 104 (RQ) each bind ATP. 2 residues coordinate Mg(2+): His-137 and Asp-179. Lys-202 is an active-site residue. Residues Arg-204, Asp-228, and 232–236 (DTAGT) each bind D-ribose 5-phosphate.

It belongs to the ribose-phosphate pyrophosphokinase family. Class I subfamily. In terms of assembly, homohexamer. It depends on Mg(2+) as a cofactor.

It is found in the cytoplasm. The catalysed reaction is D-ribose 5-phosphate + ATP = 5-phospho-alpha-D-ribose 1-diphosphate + AMP + H(+). It functions in the pathway metabolic intermediate biosynthesis; 5-phospho-alpha-D-ribose 1-diphosphate biosynthesis; 5-phospho-alpha-D-ribose 1-diphosphate from D-ribose 5-phosphate (route I): step 1/1. Involved in the biosynthesis of the central metabolite phospho-alpha-D-ribosyl-1-pyrophosphate (PRPP) via the transfer of pyrophosphoryl group from ATP to 1-hydroxyl of ribose-5-phosphate (Rib-5-P). This chain is Ribose-phosphate pyrophosphokinase, found in Staphylococcus saprophyticus subsp. saprophyticus (strain ATCC 15305 / DSM 20229 / NCIMB 8711 / NCTC 7292 / S-41).